The primary structure comprises 274 residues: Large ribosomal subunit protein uL2 (274 aa).

2 disordered regions span residues 28 to 54 (APHAPLLEKKSKTGGRNNNGRITTRHI) and 224 to 274 (VAMN…RRRK). Over residues 263-274 (KRTDKMIVRRRK) the composition is skewed to basic and acidic residues.

The protein belongs to the universal ribosomal protein uL2 family. As to quaternary structure, part of the 50S ribosomal subunit. Forms a bridge to the 30S subunit in the 70S ribosome.

In terms of biological role, one of the primary rRNA binding proteins. Required for association of the 30S and 50S subunits to form the 70S ribosome, for tRNA binding and peptide bond formation. It has been suggested to have peptidyltransferase activity; this is somewhat controversial. Makes several contacts with the 16S rRNA in the 70S ribosome. This is Large ribosomal subunit protein uL2 from Pseudomonas fluorescens (strain SBW25).